We begin with the raw amino-acid sequence, 350 residues long: D-alanine--D-alanine ligase (350 aa).

The region spanning lysine 138 to glutamine 346 is the ATP-grasp domain. Position 173–228 (glutamate 173–glutamate 228) interacts with ATP. Residues aspartate 299, glutamate 313, and asparagine 315 each coordinate Mg(2+).

Belongs to the D-alanine--D-alanine ligase family. Requires Mg(2+) as cofactor. The cofactor is Mn(2+).

The protein resides in the cytoplasm. The enzyme catalyses 2 D-alanine + ATP = D-alanyl-D-alanine + ADP + phosphate + H(+). It participates in cell wall biogenesis; peptidoglycan biosynthesis. Functionally, cell wall formation. The protein is D-alanine--D-alanine ligase of Synechococcus sp. (strain CC9605).